The primary structure comprises 371 residues: 4-hydroxy-3-methylbut-2-en-1-yl diphosphate synthase (flavodoxin) (371 aa).

Cys-271, Cys-274, Cys-306, and Glu-313 together coordinate [4Fe-4S] cluster.

This sequence belongs to the IspG family. Requires [4Fe-4S] cluster as cofactor.

The catalysed reaction is (2E)-4-hydroxy-3-methylbut-2-enyl diphosphate + oxidized [flavodoxin] + H2O + 2 H(+) = 2-C-methyl-D-erythritol 2,4-cyclic diphosphate + reduced [flavodoxin]. Its pathway is isoprenoid biosynthesis; isopentenyl diphosphate biosynthesis via DXP pathway; isopentenyl diphosphate from 1-deoxy-D-xylulose 5-phosphate: step 5/6. Converts 2C-methyl-D-erythritol 2,4-cyclodiphosphate (ME-2,4cPP) into 1-hydroxy-2-methyl-2-(E)-butenyl 4-diphosphate. The polypeptide is 4-hydroxy-3-methylbut-2-en-1-yl diphosphate synthase (flavodoxin) (Actinobacillus succinogenes (strain ATCC 55618 / DSM 22257 / CCUG 43843 / 130Z)).